The primary structure comprises 197 residues: ATP-dependent Clp protease proteolytic subunit (197 aa).

Ser98 serves as the catalytic Nucleophile. His123 is an active-site residue.

It belongs to the peptidase S14 family. As to quaternary structure, fourteen ClpP subunits assemble into 2 heptameric rings which stack back to back to give a disk-like structure with a central cavity, resembling the structure of eukaryotic proteasomes.

It localises to the cytoplasm. It catalyses the reaction Hydrolysis of proteins to small peptides in the presence of ATP and magnesium. alpha-casein is the usual test substrate. In the absence of ATP, only oligopeptides shorter than five residues are hydrolyzed (such as succinyl-Leu-Tyr-|-NHMec, and Leu-Tyr-Leu-|-Tyr-Trp, in which cleavage of the -Tyr-|-Leu- and -Tyr-|-Trp bonds also occurs).. Cleaves peptides in various proteins in a process that requires ATP hydrolysis. Has a chymotrypsin-like activity. Plays a major role in the degradation of misfolded proteins. The protein is ATP-dependent Clp protease proteolytic subunit of Enterococcus faecalis (strain ATCC 700802 / V583).